We begin with the raw amino-acid sequence, 578 residues long: Zinc finger protein with KRAB and SCAN domains 8 (578 aa).

Residues 1-20 (MAEESRKPSAPSPPDQTPEE) form a disordered region. At serine 12 the chain carries Phosphoserine. A Glycyl lysine isopeptide (Lys-Gly) (interchain with G-Cter in SUMO2) cross-link involves residue lysine 26. An SCAN box domain is found at 51–133 (RLRFRQLRYQ…TLLEDLERQI (83 aa)). The segment at 158–205 (ASAPEPPNTQLQSEATQHKSPVPQESQERAMSTSQSPTRSQKGSSGDQ) is disordered. The segment covering 165–205 (NTQLQSEATQHKSPVPQESQERAMSTSQSPTRSQKGSSGDQ) has biased composition (polar residues). Glycyl lysine isopeptide (Lys-Gly) (interchain with G-Cter in SUMO2) cross-links involve residues lysine 176 and lysine 199. At serine 201 the chain carries Phosphoserine. Positions 220–316 (EKIEDMAVSL…GRLERQRGNP (97 aa)) constitute a KRAB domain. Residues lysine 221, lysine 272, and lysine 288 each participate in a glycyl lysine isopeptide (Lys-Gly) (interchain with G-Cter in SUMO2) cross-link. C2H2-type zinc fingers lie at residues 322–344 (HKCD…WRIH) and 350–372 (YQCN…QDIH). Residues lysine 374 and lysine 376 each participate in a glycyl lysine isopeptide (Lys-Gly) (interchain with G-Cter in SUMO2) cross-link. 7 consecutive C2H2-type zinc fingers follow at residues 378 to 400 (YHCK…QRIH), 406 to 428 (YQCN…QRIH), 434 to 456 (YECN…QRIH), 462 to 484 (YECD…QRSH), 490 to 512 (YKCN…QRIH), 518 to 540 (YKCK…LRIH), and 546 to 568 (YQCN…QRIH). Glycyl lysine isopeptide (Lys-Gly) (interchain with G-Cter in SUMO2) cross-links involve residues lysine 413 and lysine 441. A Glycyl lysine isopeptide (Lys-Gly) (interchain with G-Cter in SUMO2) cross-link involves residue lysine 502. A Glycyl lysine isopeptide (Lys-Gly) (interchain with G-Cter in SUMO2) cross-link involves residue lysine 572.

It belongs to the krueppel C2H2-type zinc-finger protein family.

Its subcellular location is the nucleus. In terms of biological role, may be involved in transcriptional regulation. This Homo sapiens (Human) protein is Zinc finger protein with KRAB and SCAN domains 8 (ZKSCAN8).